A 190-amino-acid polypeptide reads, in one-letter code: Adenine phosphoribosyltransferase (190 aa).

The protein belongs to the purine/pyrimidine phosphoribosyltransferase family. In terms of assembly, homodimer.

It is found in the cytoplasm. It catalyses the reaction AMP + diphosphate = 5-phospho-alpha-D-ribose 1-diphosphate + adenine. It participates in purine metabolism; AMP biosynthesis via salvage pathway; AMP from adenine: step 1/1. Functionally, catalyzes a salvage reaction resulting in the formation of AMP, that is energically less costly than de novo synthesis. This chain is Adenine phosphoribosyltransferase, found in Cupriavidus metallidurans (strain ATCC 43123 / DSM 2839 / NBRC 102507 / CH34) (Ralstonia metallidurans).